Reading from the N-terminus, the 189-residue chain is Transmembrane protein 229b (189 aa).

Residues 1 to 17 are Cytoplasmic-facing; the sequence is MATTVTPEPLTALSRWY. The helical transmembrane segment at 18–38 threads the bilayer; the sequence is LYAIHGYFCEVMFTAAWEFVV. The Extracellular portion of the chain corresponds to 39 to 43; sequence NCNWK. A helical transmembrane segment spans residues 44–64; sequence FPGVTSVWALFIYGTCILIVE. Residues 65–75 lie on the Cytoplasmic side of the membrane; sequence RMYLCLKDRCN. Residues 76–96 form a helical membrane-spanning segment; it reads VLLRCIIYTLWTYFWEFGTGF. Topologically, residues 97-114 are extracellular; that stretch reads LLRQFNACPWDYSEFKYN. A helical transmembrane segment spans residues 115–135; that stretch reads FMGLITAEYAVPWFCASFIVE. Over 136-189 the chain is Cytoplasmic; that stretch reads RLVIRNTLRLRFDEVAESGQAEERLDRGGGGRGGRRGRGARAGATSANGYVKVD. Residues 158–189 are disordered; it reads ERLDRGGGGRGGRRGRGARAGATSANGYVKVD.

It belongs to the TMEM229 family.

Its subcellular location is the membrane. This chain is Transmembrane protein 229b (tmem229b), found in Danio rerio (Zebrafish).